A 103-amino-acid chain; its full sequence is Probable protease inhibitor Egf0.4a (103 aa).

A signal peptide spans 1 to 22 (MMSEKFALVLLVACIAFIGIET). Residues 35–87 (CGENEAYDSMRRGCEKRCDDHNPTFCFKFTTVCWCEKGYVRDKSDTCIKVEDC) enclose the TIL domain.

It belongs to the polydnaviridae EGF-like motif protein family.

In Microplitis demolitor (Parasitoid wasp), this protein is Probable protease inhibitor Egf0.4a (O4).